We begin with the raw amino-acid sequence, 223 residues long: MPAALQDHFFQRDAQVLARDLLGKVIRHKVGELWLAARIIETEAYYCAEKGSHASLGYTEKRKALFLEGGHIYMYYARGGDSLNFSAEGPGNAVLIKSAFPWTDATSDENALAQMQLNNPDASGAIRPPQRLCAGQTLLCKALGLKVPAWDAKRFDPQRLLVEDVGQTPERIIQTTRLGIPSGRDEHLMYRFVDAGYARFCTRNPLRRGQVEGRDYLFLDQGN.

This sequence belongs to the DNA glycosylase MPG family.

This is Putative 3-methyladenine DNA glycosylase from Pseudomonas syringae pv. tomato (strain ATCC BAA-871 / DC3000).